The primary structure comprises 81 residues: Cytotoxin I-like T-15 (81 aa).

Positions Met1–Thr21 are cleaved as a signal peptide. Disulfide bonds link Cys24–Cys42, Cys35–Cys59, Cys63–Cys74, and Cys75–Cys80.

This sequence belongs to the three-finger toxin family. Short-chain subfamily. Type IA cytotoxin sub-subfamily. Monomer in solution; Homodimer and oligomer in the presence of negatively charged lipids forming a pore with a size ranging between 20 and 30 Angstroms. In terms of tissue distribution, expressed by the venom gland.

The protein localises to the secreted. It localises to the target cell membrane. Shows cytolytic activity on many different cells by forming pore in lipid membranes. In vivo, increases heart rate or kills the animal by cardiac arrest. In addition, it binds to heparin with high affinity, interacts with Kv channel-interacting protein 1 (KCNIP1) in a calcium-independent manner, and binds to integrin alpha-V/beta-3 (ITGAV/ITGB3) with moderate affinity. In Naja atra (Chinese cobra), this protein is Cytotoxin I-like T-15.